Reading from the N-terminus, the 176-residue chain is Inner membrane-spanning protein YciB (176 aa).

Transmembrane regions (helical) follow at residues Phe3–Phe23, Thr24–His44, Thr49–His69, Leu81–Ile101, Val121–Phe141, and Phe149–Leu169.

It belongs to the YciB family.

The protein resides in the cell inner membrane. Functionally, plays a role in cell envelope biogenesis, maintenance of cell envelope integrity and membrane homeostasis. This is Inner membrane-spanning protein YciB from Burkholderia vietnamiensis (strain G4 / LMG 22486) (Burkholderia cepacia (strain R1808)).